The primary structure comprises 276 residues: Small ribosomal subunit protein uS2 (276 aa).

Residues 254–276 (LAGATAAAPAEGAVATETTPTEG) are disordered. Low complexity predominate over residues 255–276 (AGATAAAPAEGAVATETTPTEG).

Belongs to the universal ribosomal protein uS2 family.

This is Small ribosomal subunit protein uS2 from Mycobacterium ulcerans (strain Agy99).